A 267-amino-acid chain; its full sequence is NAD kinase 2 (267 aa).

Asp-52 (proton acceptor) is an active-site residue. Residues 52–53 (DA), 124–125 (NE), Arg-151, Asp-153, 164–169 (TAYNKS), and Ala-188 each bind NAD(+).

This sequence belongs to the NAD kinase family. Requires a divalent metal cation as cofactor.

It is found in the cytoplasm. The enzyme catalyses NAD(+) + ATP = ADP + NADP(+) + H(+). Involved in the regulation of the intracellular balance of NAD and NADP, and is a key enzyme in the biosynthesis of NADP. Catalyzes specifically the phosphorylation on 2'-hydroxyl of the adenosine moiety of NAD to yield NADP. The chain is NAD kinase 2 from Bacillus cereus (strain ATCC 14579 / DSM 31 / CCUG 7414 / JCM 2152 / NBRC 15305 / NCIMB 9373 / NCTC 2599 / NRRL B-3711).